Reading from the N-terminus, the 66-residue chain is Photosystem II reaction center protein J (66 aa).

A disordered region spans residues 1-27 (MSGKKSGLPDGRVPDRNPDGTPAVPWK). The chain crosses the membrane as a helical span at residues 37–57 (LWLVATAGGMAVMFVVGLFFY).

Belongs to the PsbJ family. PSII is composed of 1 copy each of membrane proteins PsbA, PsbB, PsbC, PsbD, PsbE, PsbF, PsbH, PsbI, PsbJ, PsbK, PsbL, PsbM, PsbT, PsbX, PsbY, PsbZ, Psb30/Ycf12, peripheral proteins PsbO, CyanoQ (PsbQ), PsbU, PsbV and a large number of cofactors. It forms dimeric complexes.

It localises to the cellular thylakoid membrane. Functionally, one of the components of the core complex of photosystem II (PSII). PSII is a light-driven water:plastoquinone oxidoreductase that uses light energy to abstract electrons from H(2)O, generating O(2) and a proton gradient subsequently used for ATP formation. It consists of a core antenna complex that captures photons, and an electron transfer chain that converts photonic excitation into a charge separation. This chain is Photosystem II reaction center protein J, found in Synechococcus sp. (strain RCC307).